The following is a 732-amino-acid chain: Acetophenone carboxylase gamma subunit (732 aa).

It belongs to the HyuA family. In terms of assembly, acetophenone carboxylase consists of five subunits; a heterooctameric subcomplex of two alpha (Apc1), two beta (Apc2), two gamma (Apc3) and two delta (Apc4) subunits assembles with the epsilon (Apc5) subunit in an unknown stoichiometry. It depends on Mg(2+) as a cofactor. Mn(2+) serves as cofactor.

It localises to the cytoplasm. It catalyses the reaction acetophenone + hydrogencarbonate + 2 ATP + H2O = 3-oxo-3-phenylpropanoate + 2 ADP + 2 phosphate + 2 H(+). With respect to regulation, inhibited by zinc ions, carbamoylphosphate and beta,gamma-imido-ATP. In terms of biological role, catalyzes the carboxylation of acetophenone to form 3-oxo-3-phenylpropanoate (benzoylacetate) in the anaerobic catabolism of ethylbenzene. Also carboxylates propiophenone at the same rate and 4-acetyl-pyridine at lower rates. This is Acetophenone carboxylase gamma subunit (apc3) from Aromatoleum aromaticum (strain DSM 19018 / LMG 30748 / EbN1) (Azoarcus sp. (strain EbN1)).